A 155-amino-acid chain; its full sequence is Protein archease-like (155 aa).

Residues Asp-26, Asp-154, and Ile-155 each contribute to the Ca(2+) site.

This sequence belongs to the archease family.

Component of the tRNA-splicing ligase complex required to facilitate the enzymatic turnover of catalytic subunit RtcB. The protein is Protein archease-like of Caenorhabditis briggsae.